A 581-amino-acid polypeptide reads, in one-letter code: NADH-quinone oxidoreductase subunit C/D (581 aa).

The segment at 1–172 is NADH dehydrogenase I subunit C; sequence MSAFELVTEL…PLFNMTASLF (172 aa). Positions 196–581 are NADH dehydrogenase I subunit D; the sequence is ELMILNYGPH…IDYVMSDVDR (386 aa).

This sequence in the N-terminal section; belongs to the complex I 30 kDa subunit family. It in the C-terminal section; belongs to the complex I 49 kDa subunit family. As to quaternary structure, NDH-1 is composed of 13 different subunits. Subunits NuoB, CD, E, F, and G constitute the peripheral sector of the complex.

It is found in the cell inner membrane. The catalysed reaction is a quinone + NADH + 5 H(+)(in) = a quinol + NAD(+) + 4 H(+)(out). Its function is as follows. NDH-1 shuttles electrons from NADH, via FMN and iron-sulfur (Fe-S) centers, to quinones in the respiratory chain. The immediate electron acceptor for the enzyme in this species is believed to be ubiquinone. Couples the redox reaction to proton translocation (for every two electrons transferred, four hydrogen ions are translocated across the cytoplasmic membrane), and thus conserves the redox energy in a proton gradient. The chain is NADH-quinone oxidoreductase subunit C/D from Rhodopseudomonas palustris (strain ATCC BAA-98 / CGA009).